The primary structure comprises 153 residues: SsrA-binding protein (153 aa).

This sequence belongs to the SmpB family.

The protein resides in the cytoplasm. Its function is as follows. Required for rescue of stalled ribosomes mediated by trans-translation. Binds to transfer-messenger RNA (tmRNA), required for stable association of tmRNA with ribosomes. tmRNA and SmpB together mimic tRNA shape, replacing the anticodon stem-loop with SmpB. tmRNA is encoded by the ssrA gene; the 2 termini fold to resemble tRNA(Ala) and it encodes a 'tag peptide', a short internal open reading frame. During trans-translation Ala-aminoacylated tmRNA acts like a tRNA, entering the A-site of stalled ribosomes, displacing the stalled mRNA. The ribosome then switches to translate the ORF on the tmRNA; the nascent peptide is terminated with the 'tag peptide' encoded by the tmRNA and targeted for degradation. The ribosome is freed to recommence translation, which seems to be the essential function of trans-translation. The polypeptide is SsrA-binding protein (Cytophaga hutchinsonii (strain ATCC 33406 / DSM 1761 / CIP 103989 / NBRC 15051 / NCIMB 9469 / D465)).